A 220-amino-acid chain; its full sequence is MAKRTKAEALKTRQELIETAIAQFAQHGVSKTTLNDIADAANVTRGAIYWHFENKTQLFNEMWLQQPSLRELIQEHLTAGLEHDPFQQLREKLIVGLQYIAKIPRQQALLKILYHKCEFNDEMLAEGVIREKMGFNPQTLREVLQACQQQGCVANNLDLDVVMIIIDGAFSGIVQNWLMNMAGYDLYKQAPALVDNVLRMFMPDENITKLIHQTNELSVM.

The HTH tetR-type domain occupies Leu10–Arg70. The H-T-H motif DNA-binding region spans Thr33 to Phe52.

In terms of biological role, potential regulator protein for the acrEF/envCD genes. This chain is Probable acrEF/envCD operon repressor (envR), found in Escherichia coli O157:H7.